Here is a 315-residue protein sequence, read N- to C-terminus: Porphobilinogen deaminase (315 aa).

An S-(dipyrrolylmethanemethyl)cysteine modification is found at C241.

It belongs to the HMBS family. Monomer. Dipyrromethane is required as a cofactor.

It carries out the reaction 4 porphobilinogen + H2O = hydroxymethylbilane + 4 NH4(+). It functions in the pathway porphyrin-containing compound metabolism; protoporphyrin-IX biosynthesis; coproporphyrinogen-III from 5-aminolevulinate: step 2/4. Functionally, tetrapolymerization of the monopyrrole PBG into the hydroxymethylbilane pre-uroporphyrinogen in several discrete steps. This is Porphobilinogen deaminase from Nitratidesulfovibrio vulgaris (strain DP4) (Desulfovibrio vulgaris).